A 185-amino-acid chain; its full sequence is Peptidyl-tRNA hydrolase (185 aa).

Position 14 (Y14) interacts with tRNA. H19 (proton acceptor) is an active-site residue. The tRNA site is built by Y65, N67, and N113.

The protein belongs to the PTH family. In terms of assembly, monomer.

Its subcellular location is the cytoplasm. It carries out the reaction an N-acyl-L-alpha-aminoacyl-tRNA + H2O = an N-acyl-L-amino acid + a tRNA + H(+). Functionally, hydrolyzes ribosome-free peptidyl-tRNAs (with 1 or more amino acids incorporated), which drop off the ribosome during protein synthesis, or as a result of ribosome stalling. In terms of biological role, catalyzes the release of premature peptidyl moieties from peptidyl-tRNA molecules trapped in stalled 50S ribosomal subunits, and thus maintains levels of free tRNAs and 50S ribosomes. This is Peptidyl-tRNA hydrolase from Rickettsia prowazekii (strain Madrid E).